The following is a 175-amino-acid chain: Alpha-crystallin B chain (175 aa).

Met-1 is subject to N-acetylmethionine. Ser-19 bears the Phosphoserine mark. Ser-41 carries an O-linked (GlcNAc) serine glycan. Ser-45 and Ser-59 each carry phosphoserine. One can recognise a sHSP domain in the interval 56 to 164 (RAPSWFDTGL…PERTIPITRE (109 aa)). Residue His-83 participates in Zn(2+) binding. Lys-92 is subject to N6-acetyllysine. Zn(2+)-binding residues include His-104, Glu-106, His-111, and His-119. The tract at residues 142–175 (VLTVNGPRKQVSGPERTIPITREEKPAVTAAPKK) is disordered. Position 166 is an N6-acetyllysine (Lys-166). An O-linked (GlcNAc) threonine glycan is attached at Thr-170.

Belongs to the small heat shock protein (HSP20) family. Heteromer composed of three CRYAA and one CRYAB subunits. Aggregates with homologous proteins, including the small heat shock protein HSPB1, to form large heteromeric complexes. Inter-subunit bridging via zinc ions enhances stability, which is crucial as there is no protein turn over in the lens. Interacts with HSPBAP1 and TTN/titin. Interacts with TMEM109; in the cellular response to DNA damage. Interacts with DES; binds rapidly during early stages of DES filament assembly and a reduced binding seen in the later stages. Interacts with TMED10; the interaction mediates the translocation from the cytoplasm into the ERGIC (endoplasmic reticulum-Golgi intermediate compartment) and thereby secretion. Interacts with ATP6V1A and with MTOR, forming a ternary complex.

The protein resides in the cytoplasm. It is found in the nucleus. Its subcellular location is the secreted. The protein localises to the lysosome. May contribute to the transparency and refractive index of the lens. Has chaperone-like activity, preventing aggregation of various proteins under a wide range of stress conditions. In lens epithelial cells, stabilizes the ATP6V1A protein, preventing its degradation by the proteasome. The polypeptide is Alpha-crystallin B chain (CRYAB) (Macaca fascicularis (Crab-eating macaque)).